We begin with the raw amino-acid sequence, 409 residues long: uncharacterized protein (409 aa).

An N-terminal signal peptide occupies residues 1–39 (MVSDSKLELPLPVNQQKPRRRRILKVHLLIAALILSAVG). Residues histidine 67, aspartate 69, glutamate 181, histidine 250, and histidine 271 each contribute to the Zn(2+) site.

This sequence belongs to the metallo-dependent hydrolases superfamily. Peptidase M19 family. Interacts with dil1. It depends on Zn(2+) as a cofactor.

It catalyses the reaction an L-aminoacyl-L-amino acid + H2O = 2 an L-alpha-amino acid. This is an uncharacterized protein from Schizosaccharomyces pombe (strain 972 / ATCC 24843) (Fission yeast).